The following is a 236-amino-acid chain: Phosphoribosylaminoimidazole-succinocarboxamide synthase (236 aa).

It belongs to the SAICAR synthetase family.

It carries out the reaction 5-amino-1-(5-phospho-D-ribosyl)imidazole-4-carboxylate + L-aspartate + ATP = (2S)-2-[5-amino-1-(5-phospho-beta-D-ribosyl)imidazole-4-carboxamido]succinate + ADP + phosphate + 2 H(+). It participates in purine metabolism; IMP biosynthesis via de novo pathway; 5-amino-1-(5-phospho-D-ribosyl)imidazole-4-carboxamide from 5-amino-1-(5-phospho-D-ribosyl)imidazole-4-carboxylate: step 1/2. The chain is Phosphoribosylaminoimidazole-succinocarboxamide synthase from Rickettsia bellii (strain OSU 85-389).